The following is a 957-amino-acid chain: Glycine dehydrogenase (decarboxylating) 2 (957 aa).

Lysine 707 is subject to N6-(pyridoxal phosphate)lysine.

Belongs to the GcvP family. The glycine cleavage system is composed of four proteins: P, T, L and H. Requires pyridoxal 5'-phosphate as cofactor.

It carries out the reaction N(6)-[(R)-lipoyl]-L-lysyl-[glycine-cleavage complex H protein] + glycine + H(+) = N(6)-[(R)-S(8)-aminomethyldihydrolipoyl]-L-lysyl-[glycine-cleavage complex H protein] + CO2. In terms of biological role, the glycine cleavage system catalyzes the degradation of glycine. The P protein binds the alpha-amino group of glycine through its pyridoxal phosphate cofactor; CO(2) is released and the remaining methylamine moiety is then transferred to the lipoamide cofactor of the H protein. The protein is Glycine dehydrogenase (decarboxylating) 2 of Pseudomonas fluorescens (strain ATCC BAA-477 / NRRL B-23932 / Pf-5).